The primary structure comprises 508 residues: Hydroxymethylglutaryl-CoA synthase, mitochondrial (508 aa).

Residues 1 to 37 (MQRLLAPARRVLQVKRVMQESSLSPAHLLPAAQQRFS) constitute a mitochondrion transit peptide. N6-succinyllysine is present on K52. (3S)-3-hydroxy-3-methylglutaryl-CoA-binding residues include E80 and A81. N6-acetyllysine; alternate occurs at positions 83 and 118. 2 positions are modified to N6-succinyllysine; alternate: K83 and K118. E132 acts as the Proton donor/acceptor in catalysis. (3S)-3-hydroxy-3-methylglutaryl-CoA is bound by residues C166, N204, and T208. C166 functions as the Acyl-thioester intermediate in the catalytic mechanism. K221 carries the post-translational modification N6-succinyllysine. K243 is modified (N6-acetyllysine). K256 is modified (N6-acetyllysine; alternate). K256 is subject to N6-succinyllysine; alternate. Residues S258 and H301 each coordinate (3S)-3-hydroxy-3-methylglutaryl-CoA. The active-site Proton donor/acceptor is the H301. K306 carries the N6-acetyllysine modification. Residue K310 coordinates (3S)-3-hydroxy-3-methylglutaryl-CoA. Residues K310 and K327 each carry the N6-acetyllysine; alternate modification. Residues K310 and K327 each carry the N6-succinyllysine; alternate modification. At K333 the chain carries N6-succinyllysine. K342, K350, K354, and K358 each carry N6-acetyllysine; alternate. Residues K342, K350, K354, and K358 each carry the N6-succinyllysine; alternate modification. The (3S)-3-hydroxy-3-methylglutaryl-CoA site is built by N380 and S414. K427 carries the N6-acetyllysine modification. Position 433 is a phosphoserine (S433). K437 is modified (N6-acetyllysine). A Phosphoserine modification is found at S440. An N6-acetyllysine; alternate modification is found at K447. K447 bears the N6-succinyllysine; alternate mark. At S456 the chain carries Phosphoserine. K473 carries the N6-acetyllysine; alternate modification. K473 is modified (N6-succinyllysine; alternate). Position 477 is a phosphoserine (S477).

This sequence belongs to the thiolase-like superfamily. HMG-CoA synthase family. Homodimer. Succinylated. Desuccinylated by SIRT5. Succinylation, at least at Lys-83 and Lys-310, inhibits the enzymatic activity. In terms of tissue distribution, liver and kidney.

It localises to the mitochondrion. The enzyme catalyses acetoacetyl-CoA + acetyl-CoA + H2O = (3S)-3-hydroxy-3-methylglutaryl-CoA + CoA + H(+). It participates in metabolic intermediate biosynthesis; (R)-mevalonate biosynthesis; (R)-mevalonate from acetyl-CoA: step 2/3. Catalyzes the first irreversible step in ketogenesis, condensing acetyl-CoA to acetoacetyl-CoA to form HMG-CoA, which is converted by HMG-CoA reductase (HMGCR) into mevalonate. The polypeptide is Hydroxymethylglutaryl-CoA synthase, mitochondrial (Hmgcs2) (Rattus norvegicus (Rat)).